Here is a 410-residue protein sequence, read N- to C-terminus: E3 ubiquitin-protein ligase ICP0 (410 aa).

An RING-type zinc finger spans residues 46 to 85; that stretch reads CPICLDVAATEAQTLPCMHKFCLDCIQRWTLTSTACPLCN. The disordered stretch occupies residues 243-410; sequence TSESEAHSDS…IFIDLTQDDD (168 aa). The segment covering 287–315 has biased composition (basic residues); it reads APRRSPRRARRAAVLRREQRRTRCLRRGR. 2 stretches are compositionally biased toward low complexity: residues 329 to 340 and 348 to 399; these read SSGEGSSAQHGA and GSAN…PRSA.

In terms of processing, auto-ubiquitinated.

The catalysed reaction is S-ubiquitinyl-[E2 ubiquitin-conjugating enzyme]-L-cysteine + [acceptor protein]-L-lysine = [E2 ubiquitin-conjugating enzyme]-L-cysteine + N(6)-ubiquitinyl-[acceptor protein]-L-lysine.. In terms of biological role, evades nuclear antiviral defenses triggered by dsDNA viruses. Acts during the initial stages of lytic infection and the reactivation of latent viral genome. Prevents the antiviral effect of nuclear bodies by degrading host PML and SP100. The sequence is that of E3 ubiquitin-protein ligase ICP0 (EP0) from Sus scrofa (Pig).